Reading from the N-terminus, the 140-residue chain is Large ribosomal subunit protein bL17 (140 aa).

The protein belongs to the bacterial ribosomal protein bL17 family. In terms of assembly, part of the 50S ribosomal subunit. Contacts protein L32.

The polypeptide is Large ribosomal subunit protein bL17 (Methylobacterium nodulans (strain LMG 21967 / CNCM I-2342 / ORS 2060)).